A 435-amino-acid polypeptide reads, in one-letter code: Zinc finger CCCH domain-containing protein 10 (435 aa).

The disordered stretch occupies residues 1–36 (MPDRDSYANGTGSSGGGPGGGGSEEASGAGTGSGGA). The span at 12 to 35 (GSSGGGPGGGGSEEASGAGTGSGG) shows a compositional bias: gly residues. 3 C3H1-type zinc fingers span residues 36-63 (ATSDAICRDFLRNVCKRGKRCRYRHPDM), 73-99 (KNEFIFCHDFQNKECSRPNCRFIHGSK), and 134-161 (KEEVPICRDFLKGDCQRGAKCKFRHLQR). Residues 166–190 (DARGGGGTGGGGSTGSAPPGRRHDL) are disordered. Residues 168-179 (RGGGGTGGGGST) are compositionally biased toward gly residues. Omega-N-methylarginine is present on residues arginine 186 and arginine 187. A coiled-coil region spans residues 235-281 (GVECRLLEEENALLRKRVEELKKQVSNLLATNEVLLEQNAQFRNQAK). Over residues 315–331 (TTLSSQALQPRPVSQQE) the composition is skewed to polar residues. A disordered region spans residues 315-363 (TTLSSQALQPRPVSQQELVAPTGAPAAPPTNAAPPAAPPPPPPHLNPEI). The span at 340 to 359 (AAPPTNAAPPAAPPPPPPHL) shows a compositional bias: pro residues.

It localises to the nucleus. Functionally, specific regulator of miRNA biogenesis. Binds, via the C3H1-type zinc finger domains, to the binding motif 5'-GCAGCGC-3' on microRNA pri-MIR143 and negatively regulates the processing to mature microRNA. The chain is Zinc finger CCCH domain-containing protein 10 (Zc3h10) from Mus musculus (Mouse).